The sequence spans 314 residues: Olfactory receptor 5G9 (314 aa).

Residues 1 to 25 lie on the Extracellular side of the membrane; the sequence is MADENYTRITEFIFIGLRYHPNLQV. Asparagine 5 carries N-linked (GlcNAc...) asparagine glycosylation. The chain crosses the membrane as a helical span at residues 26 to 46; sequence FLFLLFLLFYLVTMTGNLGMI. At 47–54 the chain is on the cytoplasmic side; that stretch reads ILIRVDSR. Residues 55–75 traverse the membrane as a helical segment; the sequence is LHTPMYFFLSHLSFVDICFSS. Residues 76–99 lie on the Extracellular side of the membrane; sequence VVAPKMLTDFFADKKAISFLGCVL. An intrachain disulfide couples cysteine 97 to cysteine 189. A helical transmembrane segment spans residues 100–120; it reads QQWFFGFFVAIECLLLASMAY. Topologically, residues 121–133 are cytoplasmic; that stretch reads DRYVAICNPLLYS. The helical transmembrane segment at 134–154 threads the bilayer; that stretch reads VAMSQRLCIQLVIGPYAVGFF. Over 155 to 196 the chain is Extracellular; it reads NTMTHTTAAFRLPFCGSNIINHFFCDMSPILSLICADIRINK. A helical membrane pass occupies residues 197–217; the sequence is LLVFIVAGAVLIVSSTTIIVS. The Cytoplasmic portion of the chain corresponds to 218-237; the sequence is YFHILIAILRIRSAEGRRKA. The helical transmembrane segment at 238 to 258 threads the bilayer; sequence FSTCSSHVTAVSILYGTLFFI. Over 259-271 the chain is Extracellular; sequence YVRPSAISSLDLN. Residues 272–292 form a helical membrane-spanning segment; that stretch reads KVVSVFYTAVIPMLNPLIYSL. The Cytoplasmic portion of the chain corresponds to 293–314; that stretch reads RNKEVKSAMGRTVAKAKVFLKN.

The protein belongs to the G-protein coupled receptor 1 family.

The protein resides in the cell membrane. Functionally, potential odorant receptor. In Mus musculus (Mouse), this protein is Olfactory receptor 5G9.